A 35-amino-acid chain; its full sequence is MEALVYTFLLVSTLGIIFFAIFFREPPKLPDRGGK.

Residues 3–23 (ALVYTFLLVSTLGIIFFAIFF) traverse the membrane as a helical segment.

This sequence belongs to the PsbT family. In terms of assembly, PSII is composed of 1 copy each of membrane proteins PsbA, PsbB, PsbC, PsbD, PsbE, PsbF, PsbH, PsbI, PsbJ, PsbK, PsbL, PsbM, PsbT, PsbY, PsbZ, Psb30/Ycf12, at least 3 peripheral proteins of the oxygen-evolving complex and a large number of cofactors. It forms dimeric complexes.

It is found in the plastid. The protein localises to the chloroplast thylakoid membrane. In terms of biological role, found at the monomer-monomer interface of the photosystem II (PS II) dimer, plays a role in assembly and dimerization of PSII. PSII is a light-driven water plastoquinone oxidoreductase, using light energy to abstract electrons from H(2)O, generating a proton gradient subsequently used for ATP formation. This chain is Photosystem II reaction center protein T, found in Metasequoia glyptostroboides (Dawn redwood).